The following is a 445-amino-acid chain: ATP-dependent protease ATPase subunit HslU (445 aa).

Residues I17, G59–E64, D254, E319, and R391 contribute to the ATP site.

This sequence belongs to the ClpX chaperone family. HslU subfamily. As to quaternary structure, a double ring-shaped homohexamer of HslV is capped on each side by a ring-shaped HslU homohexamer. The assembly of the HslU/HslV complex is dependent on binding of ATP.

Its subcellular location is the cytoplasm. ATPase subunit of a proteasome-like degradation complex; this subunit has chaperone activity. The binding of ATP and its subsequent hydrolysis by HslU are essential for unfolding of protein substrates subsequently hydrolyzed by HslV. HslU recognizes the N-terminal part of its protein substrates and unfolds these before they are guided to HslV for hydrolysis. This Pseudomonas savastanoi pv. phaseolicola (strain 1448A / Race 6) (Pseudomonas syringae pv. phaseolicola (strain 1448A / Race 6)) protein is ATP-dependent protease ATPase subunit HslU.